A 60-amino-acid polypeptide reads, in one-letter code: ATP synthase subunit J, mitochondrial (60 aa).

A helical membrane pass occupies residues 13-32 (ILKPMLPFFLGGAIVFYGTV).

It belongs to the ATPase j subunit family. F-type ATPases have 2 components, CF(1) - the catalytic core - and CF(0) - the membrane proton channel. In yeast, the dimeric form of ATP synthase consists of 17 polypeptides: alpha, beta, gamma, delta, epsilon, 4 (B), 5 (OSCP), 6 (A), 8, 9 (C), d, E (Tim11), f, g, h, i/j and k.

Its subcellular location is the mitochondrion membrane. In terms of biological role, mitochondrial membrane ATP synthase (F(1)F(0) ATP synthase or Complex V) produces ATP from ADP in the presence of a proton gradient across the membrane which is generated by electron transport complexes of the respiratory chain. F-type ATPases consist of two structural domains, F(1) - containing the extramembraneous catalytic core and F(0) - containing the membrane proton channel, linked together by a central stalk and a peripheral stalk. During catalysis, ATP synthesis in the catalytic domain of F(1) is coupled via a rotary mechanism of the central stalk subunits to proton translocation. Part of the complex F(0) domain. Minor subunit located with subunit a in the membrane. This is ATP synthase subunit J, mitochondrial (atp18) from Schizosaccharomyces pombe (strain 972 / ATCC 24843) (Fission yeast).